The primary structure comprises 878 residues: Phosphoenolpyruvate carboxylase (878 aa).

Active-site residues include histidine 138 and lysine 545.

This sequence belongs to the PEPCase type 1 family. It depends on Mg(2+) as a cofactor.

It catalyses the reaction oxaloacetate + phosphate = phosphoenolpyruvate + hydrogencarbonate. Functionally, forms oxaloacetate, a four-carbon dicarboxylic acid source for the tricarboxylic acid cycle. This is Phosphoenolpyruvate carboxylase from Shewanella sediminis (strain HAW-EB3).